Here is a 538-residue protein sequence, read N- to C-terminus: Phosphoenolpyruvate carboxykinase (ATP) (538 aa).

3 residues coordinate substrate: Arg-61, Tyr-195, and Lys-201. Residues Lys-201, His-220, and 236 to 244 contribute to the ATP site; that span reads GLSGTGKTT. 2 residues coordinate Mn(2+): Lys-201 and His-220. Asp-257 is a binding site for Mn(2+). ATP is bound by residues Glu-285, Arg-323, and Thr-449. Arg-323 lines the substrate pocket.

It belongs to the phosphoenolpyruvate carboxykinase (ATP) family. Mn(2+) serves as cofactor.

It is found in the cytoplasm. The enzyme catalyses oxaloacetate + ATP = phosphoenolpyruvate + ADP + CO2. Its pathway is carbohydrate biosynthesis; gluconeogenesis. Its function is as follows. Involved in the gluconeogenesis. Catalyzes the conversion of oxaloacetate (OAA) to phosphoenolpyruvate (PEP) through direct phosphoryl transfer between the nucleoside triphosphate and OAA. This chain is Phosphoenolpyruvate carboxykinase (ATP), found in Afipia carboxidovorans (strain ATCC 49405 / DSM 1227 / KCTC 32145 / OM5) (Oligotropha carboxidovorans).